The following is a 490-amino-acid chain: Putative alanine aminotransferase (490 aa).

Pyridoxal 5'-phosphate-binding residues include Ala-157, Ser-158, Tyr-183, Asn-239, and Ser-308. Lys-311 is subject to N6-(pyridoxal phosphate)lysine. Arg-320 provides a ligand contact to pyridoxal 5'-phosphate.

It belongs to the class-I pyridoxal-phosphate-dependent aminotransferase family. Alanine aminotransferase subfamily. Homodimer. Requires pyridoxal 5'-phosphate as cofactor.

It is found in the cytoplasm. Its subcellular location is the mitochondrion. It catalyses the reaction L-alanine + 2-oxoglutarate = pyruvate + L-glutamate. Its pathway is amino-acid degradation; L-alanine degradation via transaminase pathway; pyruvate from L-alanine: step 1/1. Alanine aminotransferase involved in both alanine biosynthesis and utilization. The chain is Putative alanine aminotransferase (alt1) from Schizosaccharomyces pombe (strain 972 / ATCC 24843) (Fission yeast).